We begin with the raw amino-acid sequence, 265 residues long: MTKKPENPGSAGIRVLKTRIKKKSGLKESSRRWLQRHINDPYVQRSKADGYRSRAAYKLIEIDDKHHLLKPGMKVIDLGAAPGGWCQVAAARTKSTAENPHVVGIDYLEMDAVPGAPVLLMDFLDPDAPQKLAEALGGNPDVVLSDMAAPTTGHKRTDHIRTMHLCEVAADFALSVLKPGGHFLAKTFQGGAENELLSMLKKNFRSVHHVKPPASRDESVELYLLAKDFKGREAGPPSGGSERPVDVSKDLSARSDSEGPGDAEG.

S-adenosyl-L-methionine contacts are provided by Gly-83, Trp-85, Asp-106, Asp-122, and Asp-146. The active-site Proton acceptor is the Lys-186. The segment at 230 to 265 is disordered; it reads KGREAGPPSGGSERPVDVSKDLSARSDSEGPGDAEG. Residues 243 to 257 show a composition bias toward basic and acidic residues; it reads RPVDVSKDLSARSDS.

It belongs to the class I-like SAM-binding methyltransferase superfamily. RNA methyltransferase RlmE family.

It localises to the cytoplasm. It catalyses the reaction uridine(2552) in 23S rRNA + S-adenosyl-L-methionine = 2'-O-methyluridine(2552) in 23S rRNA + S-adenosyl-L-homocysteine + H(+). In terms of biological role, specifically methylates the uridine in position 2552 of 23S rRNA at the 2'-O position of the ribose in the fully assembled 50S ribosomal subunit. This chain is Ribosomal RNA large subunit methyltransferase E, found in Mesorhizobium japonicum (strain LMG 29417 / CECT 9101 / MAFF 303099) (Mesorhizobium loti (strain MAFF 303099)).